The chain runs to 182 residues: Large ribosomal subunit protein uL16 (182 aa).

It belongs to the universal ribosomal protein uL16 family.

In Pyrobaculum neutrophilum (strain DSM 2338 / JCM 9278 / NBRC 100436 / V24Sta) (Thermoproteus neutrophilus), this protein is Large ribosomal subunit protein uL16.